The primary structure comprises 30 residues: Trypsin inhibitor 3 (30 aa).

Gln1 carries the pyrrolidone carboxylic acid modification. Intrachain disulfides connect Cys4–Cys21, Cys11–Cys23, and Cys17–Cys29.

It localises to the secreted. In terms of biological role, inhibits trypsin; probably participates in a plant defense mechanism. This Momordica cochinchinensis (Spiny bitter cucumber) protein is Trypsin inhibitor 3.